Consider the following 434-residue polypeptide: Eukaryotic translation initiation factor 3 subunit E (434 aa).

The 174-residue stretch at 219 to 392 folds into the PCI domain; the sequence is FFNHPKGRDL…GHVVMGTQPL (174 aa).

Belongs to the eIF-3 subunit E family. Component of the eukaryotic translation initiation factor 3 (eIF-3) complex. The eIF-3 complex interacts with pix. Interacts with mxt.

It is found in the cytoplasm. Component of the eukaryotic translation initiation factor 3 (eIF-3) complex, which is involved in protein synthesis of a specialized repertoire of mRNAs and, together with other initiation factors, stimulates binding of mRNA and methionyl-tRNAi to the 40S ribosome. The eIF-3 complex specifically targets and initiates translation of a subset of mRNAs involved in cell proliferation. The polypeptide is Eukaryotic translation initiation factor 3 subunit E (eIF3-S6) (Drosophila virilis (Fruit fly)).